Here is a 95-residue protein sequence, read N- to C-terminus: uncharacterized protein (95 aa).

The first 19 residues, 1-19 (MAILMLSLQLILLLIPSIS), serve as a signal peptide directing secretion. N-linked (GlcNAc...) asparagine glycosylation is found at N38 and N41.

The protein resides in the secreted. This is an uncharacterized protein from Homo sapiens (Human).